The primary structure comprises 225 residues: UPF0758 protein BCE_4545 (225 aa).

The 123-residue stretch at 103–225 folds into the MPN domain; that stretch reads SIRSPEDCAT…FVSLKEKGHI (123 aa). Zn(2+) is bound by residues histidine 174, histidine 176, and aspartate 187. The JAMM motif signature appears at 174–187; the sequence is HNHPSGDPAPSRED.

Belongs to the UPF0758 family.

The polypeptide is UPF0758 protein BCE_4545 (Bacillus cereus (strain ATCC 10987 / NRS 248)).